A 316-amino-acid polypeptide reads, in one-letter code: N-acetylmuramic acid 6-phosphate etherase (316 aa).

Residues 68 to 231 form the SIS domain; that stretch reads ITDRLRSGGR…STCAMVRLGK (164 aa). Catalysis depends on E96, which acts as the Proton donor. The active site involves E127.

This sequence belongs to the GCKR-like family. MurNAc-6-P etherase subfamily. As to quaternary structure, homodimer.

It carries out the reaction N-acetyl-D-muramate 6-phosphate + H2O = N-acetyl-D-glucosamine 6-phosphate + (R)-lactate. Its pathway is amino-sugar metabolism; N-acetylmuramate degradation. In terms of biological role, specifically catalyzes the cleavage of the D-lactyl ether substituent of MurNAc 6-phosphate, producing GlcNAc 6-phosphate and D-lactate. This Prochlorococcus marinus (strain MIT 9313) protein is N-acetylmuramic acid 6-phosphate etherase.